The chain runs to 206 residues: Peptidyl-tRNA hydrolase (206 aa).

Tyr19 provides a ligand contact to tRNA. His24 acts as the Proton acceptor in catalysis. Residues Phe70, Asn72, and Asn118 each coordinate tRNA.

This sequence belongs to the PTH family. In terms of assembly, monomer.

It localises to the cytoplasm. The catalysed reaction is an N-acyl-L-alpha-aminoacyl-tRNA + H2O = an N-acyl-L-amino acid + a tRNA + H(+). Hydrolyzes ribosome-free peptidyl-tRNAs (with 1 or more amino acids incorporated), which drop off the ribosome during protein synthesis, or as a result of ribosome stalling. Functionally, catalyzes the release of premature peptidyl moieties from peptidyl-tRNA molecules trapped in stalled 50S ribosomal subunits, and thus maintains levels of free tRNAs and 50S ribosomes. The sequence is that of Peptidyl-tRNA hydrolase from Synechococcus sp. (strain CC9902).